A 446-amino-acid chain; its full sequence is Chromosomal replication initiator protein DnaA (446 aa).

The tract at residues 1–82 (MENILDLWNQ…ELSIKFVIPQ (82 aa)) is domain I, interacts with DnaA modulators. Residues 83 to 103 (NQDVEDFMPKPQVKKAVKEDT) are domain II. The segment at 104-332 (SDFPQNMLNP…VAYSSLINKD (229 aa)) is domain III, AAA+ region. ATP-binding residues include glycine 154, leucine 155, glycine 156, lysine 157, and threonine 158. Threonine 158 serves as a coordination point for Mg(2+). Positions 182–206 (SEKFTNEFINSIRDNKAVDFRNRYR) match the Initiator specific motif (ISM) motif. The Mg(2+) site is built by aspartate 214 and aspartate 215. The segment at 333–346 (INADLAAEALKDII) is linker. Residues 347–446 (PSSKPKVITI…HVKEIKEQLK (100 aa)) form a domain IV, binds dsDNA region.

It belongs to the DnaA family. In terms of assembly, the DNA replisome assembles sequentially on oriC in this order; DnaA, DnaD, DnaB, DnaI-DnaC helicase. Oligomerizes as a right-handed, spiral filament on DNA at oriC. Forms an ATP-dependent helix on DNA at oriC; both DnaD and YabA inhibit formation of the DnaA helix. Forms an ATP-dependent oligomer, formation is stimulated by ds- and ssDNA; monomeric ADP-Soj inhibits oligomer formation. Interacts with DnaD. Interacts with YabA, and via YabA, with the replication machinery subunit beta sliding clamp DnaN. Interacts with YabA via domain IIIa (residues 109-275). Isolated domain I forms a 1:1 complex with SirA. Interacts with Soj, probably via domain III. Interacts via domains I and III with CcrZ. Interacts via domain IV with skin prophage-like element protein YqaH.

Its subcellular location is the cytoplasm. The protein resides in the nucleoid. It carries out the reaction ATP + H2O = ADP + phosphate + H(+). Its activity is regulated as follows. Oligomerization of DnaA can be controlled by Soj; monomeric ADP-Soj inhibits formation of the DnaA helix. YabA prevents the cooperative binding of DnaA-ATP to oriC-containing sequences; increased levels of DnaN (beta sliding clamp subunit of DNA polymerase) removes YabA from association with DnaA on the chromosome, enabling increased association of DnaA with its chromosomal binding sites. Both Soj and YabA chase DnaA from oriC site, YabA tethers DnaA to the DNA replication fork via the beta sliding clamp subunit DnaN. SirA antagonizes the ability of DnaA to bind to the replication origin, and thus decreases replication inititation during sporulation. Small protein YqaH, part of the skin prophage-like element, binds to DnaA and antagonizes its replication initiation and transcriptional regulation activities. Functionally, plays an essential role in the initiation and regulation of chromosomal replication. ATP-DnaA binds to the origin of replication (oriC) to initiate formation of the DNA replication initiation complex once per cell cycle. Binds directly to oriC at a 9 bp consensus (DnaA box): 5'-TTATCCACA-3' and separates the double-stranded (ds)DNA. Forms a right-handed helical filament on oriC DNA; dsDNA binds to the exterior of the filament while single-stranded (ss)DNA is stabilized in the filament's interior. The ATP-DnaA-oriC complex binds and stabilizes one strand of the AT-rich DNA unwinding element (DUE or basal unwinding system, BUS), permitting loading of DNA polymerase. Binds ATP with high affinity, ADP with lower affinity, but not AMP, cAMP or cGMP; ATP stimulates binding to DnaA boxes. Once bound promotes sequence-specific strand separation of DnaA-trios (3'-GAT-5' consensus) adjacent to oriC in the presence of ATP but not ADP. Domains III and IV are sufficient to separate dsDNA strands. The 'initiator specific motif' (ISM) of domain III contacts the middle adenine residue of the DnaA-trio probably stretching and stabilizing ssDNA. DnaA-trio recognition is co-operative and depends on DnaA self-assembly. The ssDNA serves as an assembly region for the replication machinery. Tethered to DnaN (beta sliding clamp subunit of DNA polymerase) and thus replication forks by YabA. During replication initiation DnaA-ATP binds cooperatively to sequences in oriC. YabA prevents this cooperative binding while still allowing DnaA to bind DNA. During the cell cycle an initial phase occurs in which DnaA is associated with origin regions, then the origin regions become spatially separate from the centrally sequestered DnaA molecules, and most DnaA molecules are unable to reassociate with origin regions. Does not require YabA to bind DNA. During sporulation SirA prevents DnaA association with the replication origin to prevent excessive chromosome replication. Overexpression induces the SOS response; increasing expression of downstream dnaN blocks this induction. Over-initiation of DNA replication is very deleterious; isolated suppressors in relA, ndrR, dnaC, cshA and crrZ increase replication elongation, decrease replication inititation or lead to a decrease in the replicative DNA helicase. Binds acidic phospholipids. Its function is as follows. The half-life of ADP-DnaA is 1.5 minutes, of ATP-DnaA is 5 minutes at 37 degrees Celsius; in E.coli the half-life of ADP-DnaA is about 45 minutes. In terms of biological role, also acts as a transcriptional regulator. DnaA inhibits its own gene expression. DnaA binds specifically to the promoter regions of at least 20 operons (56 genes), including itself, sda and dnaB, and probably controls their expression in response to DNA replication inhibition. In Bacillus subtilis (strain 168), this protein is Chromosomal replication initiator protein DnaA.